A 127-amino-acid polypeptide reads, in one-letter code: Aspartate 1-decarboxylase (127 aa).

The active-site Schiff-base intermediate with substrate; via pyruvic acid is the S25. The residue at position 25 (S25) is a Pyruvic acid (Ser). Position 57 (T57) interacts with substrate. Y58 (proton donor) is an active-site residue. 73-75 (GSA) contacts substrate.

Belongs to the PanD family. As to quaternary structure, heterooctamer of four alpha and four beta subunits. The cofactor is pyruvate. In terms of processing, is synthesized initially as an inactive proenzyme, which is activated by self-cleavage at a specific serine bond to produce a beta-subunit with a hydroxyl group at its C-terminus and an alpha-subunit with a pyruvoyl group at its N-terminus.

It localises to the cytoplasm. The catalysed reaction is L-aspartate + H(+) = beta-alanine + CO2. It functions in the pathway cofactor biosynthesis; (R)-pantothenate biosynthesis; beta-alanine from L-aspartate: step 1/1. In terms of biological role, catalyzes the pyruvoyl-dependent decarboxylation of aspartate to produce beta-alanine. This chain is Aspartate 1-decarboxylase, found in Laribacter hongkongensis (strain HLHK9).